Consider the following 228-residue polypeptide: DNA-binding response regulator MtrA (228 aa).

A Response regulatory domain is found at arginine 7–leucine 120. Aspartate 56 carries the post-translational modification 4-aspartylphosphate. Positions alanine 128–proline 227 form a DNA-binding region, ompR/PhoB-type.

As to quaternary structure, probably a monomer when inactive, phosphorylation may permit it to oligomerize. The monomeric form does not seem to be phosphorylated. Phosphorylated by MtrB.

It localises to the cytoplasm. Member of the two-component regulatory system MtrA/MtrB, responding to environmental signals. Controls expression of a number of genes including dnaA, ripA, fbpB and probably itself. Probably plays a role in cell division. The chain is DNA-binding response regulator MtrA (mtrA) from Mycolicibacterium smegmatis (strain ATCC 700084 / mc(2)155) (Mycobacterium smegmatis).